A 567-amino-acid polypeptide reads, in one-letter code: Urease subunit alpha (567 aa).

In terms of domain architecture, Urease spans 129–567 (GGIDSHIHFI…LPMAQRYFLF (439 aa)). Residues H134, H136, and K217 each contribute to the Ni(2+) site. Position 217 is an N6-carboxylysine (K217). H219 serves as a coordination point for substrate. Residues H246 and H272 each contribute to the Ni(2+) site. H320 serves as the catalytic Proton donor. D360 is a binding site for Ni(2+).

The protein belongs to the metallo-dependent hydrolases superfamily. Urease alpha subunit family. Heterotrimer of UreA (gamma), UreB (beta) and UreC (alpha) subunits. Three heterotrimers associate to form the active enzyme. Requires Ni cation as cofactor. In terms of processing, carboxylation allows a single lysine to coordinate two nickel ions.

It is found in the cytoplasm. It catalyses the reaction urea + 2 H2O + H(+) = hydrogencarbonate + 2 NH4(+). It participates in nitrogen metabolism; urea degradation; CO(2) and NH(3) from urea (urease route): step 1/1. This chain is Urease subunit alpha, found in Alcanivorax borkumensis (strain ATCC 700651 / DSM 11573 / NCIMB 13689 / SK2).